The following is a 320-amino-acid chain: 1-aminocyclopropane-1-carboxylate oxidase 3 (320 aa).

The stretch at 111–131 forms a coiled coil; sequence NEYRLAMKDFGKRLEILAEEL. One can recognise a Fe2OG dioxygenase domain in the interval 155–256; sequence GPTFATKLSN…RMSIASFYNP (102 aa). Positions 180, 182, and 237 each coordinate Fe cation. Arg-247 contributes to the 2-oxoglutarate binding site.

Belongs to the iron/ascorbate-dependent oxidoreductase family. Requires Fe(2+) as cofactor.

It catalyses the reaction 1-aminocyclopropane-1-carboxylate + L-ascorbate + O2 = ethene + L-dehydroascorbate + hydrogen cyanide + CO2 + 2 H2O. The protein operates within alkene biosynthesis; ethylene biosynthesis via S-adenosyl-L-methionine; ethylene from S-adenosyl-L-methionine: step 2/2. Functionally, enzyme involved in the ethylene biosynthesis. May promote stem elongation by maximizing the extensibility cells, possibly by activating ethylene biosynthesis, in response to very-long-chain fatty acids (VLCFAs C20:0 to C30:0). The protein is 1-aminocyclopropane-1-carboxylate oxidase 3 of Arabidopsis thaliana (Mouse-ear cress).